The primary structure comprises 345 residues: GTPase Obg (345 aa).

Positions 1-159 (MKFIDEAIIK…RTLRLELKLL (159 aa)) constitute an Obg domain. Positions 127-148 (NARFKSSTNRAPRKTTQGKPGE) are disordered. A compositionally biased stretch (polar residues) spans 130–144 (FKSSTNRAPRKTTQG). One can recognise an OBG-type G domain in the interval 160 to 334 (ADVGLLGLPN…LIHAVMQYLE (175 aa)). GTP contacts are provided by residues 166-173 (GLPNAGKS), 191-195 (FTTLH), 213-216 (DIPG), 284-287 (NKTD), and 315-317 (SAL). Residues serine 173 and threonine 193 each contribute to the Mg(2+) site.

It belongs to the TRAFAC class OBG-HflX-like GTPase superfamily. OBG GTPase family. As to quaternary structure, monomer. Requires Mg(2+) as cofactor.

Its subcellular location is the cytoplasm. Its function is as follows. An essential GTPase which binds GTP, GDP and possibly (p)ppGpp with moderate affinity, with high nucleotide exchange rates and a fairly low GTP hydrolysis rate. Plays a role in control of the cell cycle, stress response, ribosome biogenesis and in those bacteria that undergo differentiation, in morphogenesis control. In Nitrosococcus oceani (strain ATCC 19707 / BCRC 17464 / JCM 30415 / NCIMB 11848 / C-107), this protein is GTPase Obg.